The primary structure comprises 210 residues: uncharacterized protein (210 aa).

This is an uncharacterized protein from Dictyostelium discoideum (Social amoeba).